The chain runs to 1337 residues: Receptor-type tyrosine-protein phosphatase eta (1337 aa).

The first 35 residues, 1–35, serve as a signal peptide directing secretion; it reads MKPAAREARLPPRSPGLRWALPLLLLLLRLGQILC. Topologically, residues 36–975 are extracellular; that stretch reads AGGTPSPIPD…LPQDPGVICG (940 aa). 2 stretches are compositionally biased toward polar residues: residues 67–82 and 89–119; these read SFHKQNGTGTPQVETN and SSGANDSLRTPEQGSNGTDGASQKTPSSTGP. The interval 67-124 is disordered; it reads SFHKQNGTGTPQVETNTSEDGESSGANDSLRTPEQGSNGTDGASQKTPSSTGPSPVFD. Asn-72, Asn-82, Asn-93, Asn-104, Asn-142, Asn-172, Asn-192, Asn-231, Asn-258, Asn-278, Asn-342, Asn-351, Asn-376, Asn-391, Asn-396, Asn-413, Asn-431, Asn-501, Asn-525, Asn-536, Asn-582, Asn-603, Asn-618, Asn-628, Asn-637, Asn-666, Asn-669, Asn-761, Asn-772, Asn-784, Asn-790, Asn-824, Asn-910, and Asn-937 each carry an N-linked (GlcNAc...) asparagine glycan. Fibronectin type-III domains follow at residues 121 to 209, 207 to 291, 271 to 364, 368 to 456, 457 to 541, 542 to 623, 625 to 720, 721 to 817, and 816 to 902; these read PVFD…EPIP, PIPV…EGGL, NPYL…EFRT, QVFD…PPVP, VSDF…TVPS, AVFD…TAQY, RPSN…TDPA, SMAS…TDPP, and PPPP…SEVL. Positions 278–327 are disordered; sequence NKTKGDPLGTEGGLDASNTERSRAGSPTAPVHDESLVGPVDPSSGQQSRD. Residues 976–996 form a helical membrane-spanning segment; sequence AVFGCIFGALVIVTVGGFIFW. Residues 997–1337 are Cytoplasmic-facing; sequence RKKRKDAKNN…TFGKTNGYIA (341 aa). Phosphoserine is present on Ser-1009. Positions 1041 to 1298 constitute a Tyrosine-protein phosphatase domain; it reads FAEEYEDLKL…VFLNQCVLDI (258 aa). Substrate contacts are provided by residues Asp-1205, 1239–1245, and Gln-1283; that span reads CSAGVGR. Cys-1239 acts as the Phosphocysteine intermediate in catalysis.

This sequence belongs to the protein-tyrosine phosphatase family. Receptor class 3 subfamily. In terms of assembly, monomer. Interacts with CTNNB1 (phosphorylated) and JUP (phosphorylated). Interacts with FLT3 (phosphorylated). Interacts with GAB1 and GRB2. In terms of processing, N- and O-glycosylated. Post-translationally, N-glycosylated. In terms of tissue distribution, expressed in the promyelocytic cell line HL-60, the granulocyte-macrophage colony-stimulating factor-dependent leukemic cell line F-36P, and the IL3 and erythropoietin-dependent leukemic cell line F-36E. Expressed predominantly in epithelial cells and lymphocytes. Enhanced expression at high cell density. Expressed in the brain.

The protein resides in the cell membrane. It is found in the cell projection. The protein localises to the ruffle membrane. It localises to the cell junction. Its subcellular location is the secreted. The protein resides in the extracellular space. The enzyme catalyses O-phospho-L-tyrosyl-[protein] + H2O = L-tyrosyl-[protein] + phosphate. Tyrosine phosphatase which dephosphorylates or contributes to the dephosphorylation of CTNND1, FLT3, PDGFRB, MET, KDR, LYN, SRC, MAPK1, MAPK3, EGFR, TJP1, OCLN, PIK3R1 and PIK3R2. Plays a role in cell adhesion, migration, proliferation and differentiation. Has a role in megakaryocytes and platelet formation. Involved in vascular development. Regulator of macrophage adhesion and spreading. Positively affects cell-matrix adhesion. Positive regulator of platelet activation and thrombosis. Negative regulator of cell proliferation. Negative regulator of PDGF-stimulated cell migration; through dephosphorylation of PDGFR. Positive regulator of endothelial cell survival, as well as of VEGF-induced SRC and AKT activation; through KDR dephosphorylation. Negative regulator of EGFR signaling pathway; through EGFR dephosphorylation. Enhances the barrier function of epithelial junctions during reassembly. Negatively regulates T-cell receptor (TCR) signaling. Upon T-cell TCR activation, it is up-regulated and excluded from the immunological synapses, while upon T-cell-antigen presenting cells (APC) disengagement, it is no longer excluded and can dephosphorylate PLCG1 and LAT to down-regulate prolongation of signaling. In terms of biological role, activates angiogenesis and cell migration. Downregulates the expression of the endothelial adhesion molecules ICAM1 and VCAM1. The polypeptide is Receptor-type tyrosine-protein phosphatase eta (PTPRJ) (Homo sapiens (Human)).